A 120-amino-acid chain; its full sequence is Immunoglobulin lambda variable 2-14 (120 aa).

An N-terminal signal peptide occupies residues 1 to 19; the sequence is MAWALLLLTLLTQGTGSWA. At Q20 the chain carries Pyrrolidone carboxylic acid. Positions 20–44 are framework-1; that stretch reads QSALTQPASVSGSPGQSITISCTGT. The Ig-like domain occupies 20–119; the sequence is QSALTQPASV…SSYTSSSTLH (100 aa). A disulfide bond links C41 and C109. The segment at 45–53 is complementarity-determining-1; the sequence is SSDVGGYNY. Residues 54–70 are framework-2; sequence VSWYQQHPGKAPKLMIY. A complementarity-determining-2 region spans residues 71–73; sequence EVS. The framework-3 stretch occupies residues 74-109; that stretch reads NRPSGVSNRFSGSKSGNTASLTISGLQAEDEADYYC. Residues 110–119 are complementarity-determining-3; the sequence is SSYTSSSTLH.

As to quaternary structure, immunoglobulins are composed of two identical heavy chains and two identical light chains; disulfide-linked.

It is found in the secreted. It localises to the cell membrane. Functionally, v region of the variable domain of immunoglobulin light chains that participates in the antigen recognition. Immunoglobulins, also known as antibodies, are membrane-bound or secreted glycoproteins produced by B lymphocytes. In the recognition phase of humoral immunity, the membrane-bound immunoglobulins serve as receptors which, upon binding of a specific antigen, trigger the clonal expansion and differentiation of B lymphocytes into immunoglobulins-secreting plasma cells. Secreted immunoglobulins mediate the effector phase of humoral immunity, which results in the elimination of bound antigens. The antigen binding site is formed by the variable domain of one heavy chain, together with that of its associated light chain. Thus, each immunoglobulin has two antigen binding sites with remarkable affinity for a particular antigen. The variable domains are assembled by a process called V-(D)-J rearrangement and can then be subjected to somatic hypermutations which, after exposure to antigen and selection, allow affinity maturation for a particular antigen. The sequence is that of Immunoglobulin lambda variable 2-14 from Homo sapiens (Human).